The primary structure comprises 118 residues: MLKIKLFSLVAIPFLFLSSYTSYAGDKYTITGAVENVSYNNSPTWPCYIAVDGEDDGKGGRRNYFHAANNTSICGLAERAKILNYRVKIYAEVDTGANIVYQIEFANTQSKYWDRASR.

The protein is Putative protein p10 (10) of Acyrthosiphon pisum secondary endosymbiont phage 1 (Bacteriophage APSE-1).